Here is a 63-residue protein sequence, read N- to C-terminus: Large ribosomal subunit protein bL32 (63 aa).

The disordered stretch occupies residues 1 to 20; the sequence is MANPKAKMSKSRRDKRRAQF. A compositionally biased stretch (basic residues) spans 7–18; that stretch reads KMSKSRRDKRRA.

Belongs to the bacterial ribosomal protein bL32 family.

This chain is Large ribosomal subunit protein bL32, found in Chlorobaculum tepidum (strain ATCC 49652 / DSM 12025 / NBRC 103806 / TLS) (Chlorobium tepidum).